We begin with the raw amino-acid sequence, 299 residues long: Glutamyl-Q tRNA(Asp) synthetase (299 aa).

L-glutamate is bound by residues 18 to 22 and Glu54; that span reads RFAPS. The 'HIGH' region motif lies at 21–31; it reads PSPSGALHFGS. 4 residues coordinate Zn(2+): Cys110, Cys112, Tyr124, and Cys128. L-glutamate contacts are provided by Tyr181 and Arg199. The 'KMSKS' region signature appears at 237 to 241; sequence KLSKQ. Lys240 lines the ATP pocket.

The protein belongs to the class-I aminoacyl-tRNA synthetase family. GluQ subfamily. Zn(2+) serves as cofactor.

In terms of biological role, catalyzes the tRNA-independent activation of glutamate in presence of ATP and the subsequent transfer of glutamate onto a tRNA(Asp). Glutamate is transferred on the 2-amino-5-(4,5-dihydroxy-2-cyclopenten-1-yl) moiety of the queuosine in the wobble position of the QUC anticodon. This chain is Glutamyl-Q tRNA(Asp) synthetase, found in Shewanella oneidensis (strain ATCC 700550 / JCM 31522 / CIP 106686 / LMG 19005 / NCIMB 14063 / MR-1).